Here is a 462-residue protein sequence, read N- to C-terminus: MARLRRRWTAEEDTLLRRAVENATTQGRPLLWRDLAKSVPGRSNKDCRRRWWNSLADGTTKGPWCEEEDERLIEAVRKYGTNWSRVSRAIRSRNPDQCSSHWSQVLDPGINYCDWTPEEDANLLHAVLTHSTNWATIAASHVPPRTRLALKNRYSTLRLKHENESKRESTIRKSVETPPSNFEPTMAISKDVKWTPPAQIHQGRGPDPVDVLIESDEEEDDDDDDEDNEEDDGDDENRGDGNSKNSMPHIELGNSLNGVDNGAVDIQMQDTGVTASNDWADFTEPSALPPLDYFHHDAQHIPMDSWANDTESHVQYEDLLELTPGENYLCDMDDSGAMNTGVQYKSYGSTPTNIDLSNPIGFHELHRTVEIFPSTTTGMDSSSAPGSRDTPPSMHFGTSASTTPRTSISGWSHQSAHYQVCVNMICTGAQMESLMTGLASLGTCITMKIDIKEDKAPLENQL.

HTH myb-type domains lie at methionine 1–serine 54, alanine 56–isoleucine 110, and cysteine 113–glutamate 162. DNA-binding regions (H-T-H motif) lie at residues tryptophan 32 to tryptophan 52, tryptophan 83 to leucine 106, and tryptophan 134 to arginine 158. Residues leucine 159–valine 175 show a composition bias toward basic and acidic residues. 3 disordered regions span residues leucine 159 to proline 184, aspartate 216 to glycine 262, and serine 374 to isoleucine 408. Over residues aspartate 216–aspartate 235 the composition is skewed to acidic residues. Composition is skewed to polar residues over residues serine 374–proline 385 and phenylalanine 396–isoleucine 408.

The protein localises to the nucleus. Functionally, myb-like transcriptional regulator; part of the gene cluster that mediates the biosynthesis of the phthalide-terpenoid hybrid 11'-O-desmethylfendlerol. The polypeptide is Myb-like transcriptional regulator mfmK (Annulohypoxylon moriforme (Filamentous fungus)).